A 185-amino-acid polypeptide reads, in one-letter code: Elongation factor P (185 aa).

Belongs to the elongation factor P family.

The protein resides in the cytoplasm. It participates in protein biosynthesis; polypeptide chain elongation. Its function is as follows. Involved in peptide bond synthesis. Stimulates efficient translation and peptide-bond synthesis on native or reconstituted 70S ribosomes in vitro. Probably functions indirectly by altering the affinity of the ribosome for aminoacyl-tRNA, thus increasing their reactivity as acceptors for peptidyl transferase. The polypeptide is Elongation factor P (Staphylococcus saprophyticus subsp. saprophyticus (strain ATCC 15305 / DSM 20229 / NCIMB 8711 / NCTC 7292 / S-41)).